The primary structure comprises 172 residues: MELKTSDVAIRLGVSPKTIQRWVRKYNIPLRRNEAGHYLFDEKTVALLERVKFEQGAAMEAPPTPKRPPTPLRNNIPIDALHESIEPEIARVSSRLDQLERQLEQKADDVVSIQLLHHRQEMEEIVARLTALEQLVARLEQQLNNRPPSSHETSDEPKQKRRGLGRVMGLFA.

The H-T-H motif DNA-binding region spans 5 to 25 (TSDVAIRLGVSPKTIQRWVRK). Disordered stretches follow at residues 57–76 (AAMEAPPTPKRPPTPLRNNI) and 142–172 (QLNNRPPSSHETSDEPKQKRRGLGRVMGLFA). The span at 62–71 (PPTPKRPPTP) shows a compositional bias: pro residues. The stretch at 83–146 (ESIEPEIARV…ARLEQQLNNR (64 aa)) forms a coiled coil. A compositionally biased stretch (polar residues) spans 142–151 (QLNNRPPSSH).

It belongs to the RacA family.

The protein localises to the cytoplasm. Required for the formation of axial filaments and for anchoring the origin regions at the cell poles in sporulating cells, thus ensuring proper chromosome segregation in the prespore. Binds in a dispersed manner throughout the chromosome but preferentially to sites clustered in the origin portion of the chromosome, causing condensation of the chromosome and its remodeling into an elongated, anchored structure. The sequence is that of Chromosome-anchoring protein RacA from Geobacillus kaustophilus (strain HTA426).